Here is a 317-residue protein sequence, read N- to C-terminus: Transcription factor EC (317 aa).

A disordered region spans residues 1 to 44 (MTLDHQILNQSFKRSHPPTPSSELLVQHGHPSPESDTGLTGNPL). Positions 1–90 (MTLDHQILNQ…GLTSASCPSS (90 aa)) are necessary for transcriptional transactivation. Residues 34–43 (ESDTGLTGNP) show a composition bias toward polar residues. A bHLH domain is found at 110–163 (QKKDNHNLIERRRRYNINYRIKELGTLIPKSNDPDMRWNKGTILKASVEYIKWL). Positions 241–317 (TSPELCDQAM…SFSSEDGDEL (77 aa)) are necessary for transcriptional transactivation. Residues 297 to 317 (PAVSKESSRRSSFSSEDGDEL) form a disordered region.

This sequence belongs to the MiT/TFE family. As to quaternary structure, homodimer. Forms heterodimers with MITF and TFE3. Interacts with MITF.

It localises to the nucleus. Its function is as follows. Transcriptional regulator that acts as a repressor or an activator. Acts as a transcriptional repressor on minimal promoter containing element F (that includes an E-box sequence). Binds to element F in an E-box sequence-specific manner. Acts as a transcriptional transactivator on the proximal promoter region of the tartrate-resistant acid phosphatase (TRAP) E-box containing promoter. Collaborates with MITF in target gene activation. Acts as a transcriptional repressor on minimal promoter containing mu E3 enhancer sequence. Binds to mu E3 DNA sequence of the immunoglobulin heavy-chain gene enhancer. Binds DNA in a homo- or heterodimeric form. This Bos taurus (Bovine) protein is Transcription factor EC (TFEC).